Reading from the N-terminus, the 173-residue chain is NADH-ubiquinone oxidoreductase chain 6 (173 aa).

The next 5 membrane-spanning stretches (helical) occupy residues Met-1–Ser-21, Tyr-27–Gly-47, Ile-48–Val-68, Val-87–Phe-107, and Cys-139–Leu-159.

Belongs to the complex I subunit 6 family.

It is found in the mitochondrion membrane. The catalysed reaction is a ubiquinone + NADH + 5 H(+)(in) = a ubiquinol + NAD(+) + 4 H(+)(out). In terms of biological role, core subunit of the mitochondrial membrane respiratory chain NADH dehydrogenase (Complex I) that is believed to belong to the minimal assembly required for catalysis. Complex I functions in the transfer of electrons from NADH to the respiratory chain. The immediate electron acceptor for the enzyme is believed to be ubiquinone. This chain is NADH-ubiquinone oxidoreductase chain 6 (MT-ND6), found in Alca torda (Razorbill).